The chain runs to 232 residues: MAKEGKRIRAAREGIEATKLYALDEAIKLVKERATAKFDETVEVSMNLGVDPRHADQMVRGVCNLPNGSGRTVRVAVFARGAKADDARAAGADIVGAEDLLEIVQGGKIEFDRCIATPDMMPLVGRLGKVLGPRGLMPNPKVGTVTMDVKGAVAGAKGGSVEFRVEKAGIVHAGVGKVSFDADKLVENIKAFADAVAKAKPAGAKGTYVQRIAVTSTMGPGVKVEPNTVLTA.

It belongs to the universal ribosomal protein uL1 family. In terms of assembly, part of the 50S ribosomal subunit.

Its function is as follows. Binds directly to 23S rRNA. The L1 stalk is quite mobile in the ribosome, and is involved in E site tRNA release. In terms of biological role, protein L1 is also a translational repressor protein, it controls the translation of the L11 operon by binding to its mRNA. This Methylobacterium radiotolerans (strain ATCC 27329 / DSM 1819 / JCM 2831 / NBRC 15690 / NCIMB 10815 / 0-1) protein is Large ribosomal subunit protein uL1.